The chain runs to 223 residues: Deoxyribose-phosphate aldolase (223 aa).

Catalysis depends on Asp-91, which acts as the Proton donor/acceptor. Catalysis depends on Lys-153, which acts as the Schiff-base intermediate with acetaldehyde. Lys-182 (proton donor/acceptor) is an active-site residue.

This sequence belongs to the DeoC/FbaB aldolase family. DeoC type 1 subfamily.

It is found in the cytoplasm. It catalyses the reaction 2-deoxy-D-ribose 5-phosphate = D-glyceraldehyde 3-phosphate + acetaldehyde. Its pathway is carbohydrate degradation; 2-deoxy-D-ribose 1-phosphate degradation; D-glyceraldehyde 3-phosphate and acetaldehyde from 2-deoxy-alpha-D-ribose 1-phosphate: step 2/2. Catalyzes a reversible aldol reaction between acetaldehyde and D-glyceraldehyde 3-phosphate to generate 2-deoxy-D-ribose 5-phosphate. This chain is Deoxyribose-phosphate aldolase, found in Streptococcus pyogenes serotype M1.